The following is a 129-amino-acid chain: Large ribosomal subunit protein bL12 (129 aa).

This sequence belongs to the bacterial ribosomal protein bL12 family. As to quaternary structure, homodimer. Part of the ribosomal stalk of the 50S ribosomal subunit. Forms a multimeric L10(L12)X complex, where L10 forms an elongated spine to which 2 to 4 L12 dimers bind in a sequential fashion. Binds GTP-bound translation factors.

In terms of biological role, forms part of the ribosomal stalk which helps the ribosome interact with GTP-bound translation factors. Is thus essential for accurate translation. The chain is Large ribosomal subunit protein bL12 from Solidesulfovibrio magneticus (strain ATCC 700980 / DSM 13731 / RS-1) (Desulfovibrio magneticus).